Reading from the N-terminus, the 215-residue chain is Pyrrolidone-carboxylate peptidase (215 aa).

Active-site residues include Glu80, Cys143, and His167.

Belongs to the peptidase C15 family. As to quaternary structure, homotetramer.

It is found in the cytoplasm. It catalyses the reaction Release of an N-terminal pyroglutamyl group from a polypeptide, the second amino acid generally not being Pro.. In terms of biological role, removes 5-oxoproline from various penultimate amino acid residues except L-proline. This chain is Pyrrolidone-carboxylate peptidase, found in Yersinia pseudotuberculosis serotype O:3 (strain YPIII).